The chain runs to 228 residues: MKTCLQLARLLQLASPTLPVGAYTYSQGLEWAVESGVIRDEASAGRWIADLMHHGIGCYEAPMVAALMTAWSAGDVDEIECLNAEFLASRESAELRAETVQMGFSMRRLLRDLRDDTLAAVATLVETQAEVAFPTVWSGIAAAWQIEPEAAVTAYLWSWAENQVMAALKAVPLGQASGQRLLAELGSRIPEAAANANTLPKSRWSNFTPAFAIACARHETQYSRLFRS.

It belongs to the UreF family. UreD, UreF and UreG form a complex that acts as a GTP-hydrolysis-dependent molecular chaperone, activating the urease apoprotein by helping to assemble the nickel containing metallocenter of UreC. The UreE protein probably delivers the nickel.

The protein localises to the cytoplasm. Functionally, required for maturation of urease via the functional incorporation of the urease nickel metallocenter. This chain is Urease accessory protein UreF, found in Dechloromonas aromatica (strain RCB).